The chain runs to 520 residues: Sodium-dependent dicarboxylate transporter SdcS (520 aa).

The next 14 helical transmembrane spans lie at alanine 30–phenylalanine 50, leucine 55–threonine 75, alanine 77–leucine 97, serine 104–methionine 124, serine 160–isoleucine 180, isoleucine 207–isoleucine 227, phenylalanine 242–leucine 262, lysine 298–leucine 318, valine 323–isoleucine 343, glutamate 362–serine 382, glycine 399–valine 419, methionine 428–methionine 448, alanine 452–phenylalanine 472, and leucine 491–isoleucine 511.

Belongs to the SLC13A/DASS transporter (TC 2.A.47) family. NADC subfamily.

The protein resides in the cell membrane. Its function is as follows. Mediates the transport of the dicarboxylates fumarate, malate, and succinate across the cytoplasmic membrane via a Na(+)-electrochemical gradient. This chain is Sodium-dependent dicarboxylate transporter SdcS (sdcS), found in Staphylococcus aureus (strain NCTC 8325 / PS 47).